A 104-amino-acid chain; its full sequence is Probable head completion protein 1 (104 aa).

The protein belongs to the skunalikevirus head completion protein 1 family.

The protein resides in the virion. Its function is as follows. Probable head completion protein that exhibits an open central channel for viral DNA ejection. Part of the head-tail connector by binding to the portal protein and to the head completion protein 2. Plays a role in morphogenesis of the virion capsid after genome packaging. This Lactococcus lactis (Lactococcus lactis bacteriophage p2) protein is Probable head completion protein 1.